We begin with the raw amino-acid sequence, 464 residues long: Kynureninase 2 (464 aa).

Pyridoxal 5'-phosphate is bound by residues L135, T136, 163 to 166, D248, H251, and Y273; that span reads FPSD. Residue K274 is modified to N6-(pyridoxal phosphate)lysine. W313 and N341 together coordinate pyridoxal 5'-phosphate.

This sequence belongs to the kynureninase family. Homodimer. It depends on pyridoxal 5'-phosphate as a cofactor.

Its subcellular location is the cytoplasm. The catalysed reaction is L-kynurenine + H2O = anthranilate + L-alanine + H(+). The enzyme catalyses 3-hydroxy-L-kynurenine + H2O = 3-hydroxyanthranilate + L-alanine + H(+). The protein operates within amino-acid degradation; L-kynurenine degradation; L-alanine and anthranilate from L-kynurenine: step 1/1. It participates in cofactor biosynthesis; NAD(+) biosynthesis; quinolinate from L-kynurenine: step 2/3. Functionally, catalyzes the cleavage of L-kynurenine (L-Kyn) and L-3-hydroxykynurenine (L-3OHKyn) into anthranilic acid (AA) and 3-hydroxyanthranilic acid (3-OHAA), respectively. This Aspergillus clavatus (strain ATCC 1007 / CBS 513.65 / DSM 816 / NCTC 3887 / NRRL 1 / QM 1276 / 107) protein is Kynureninase 2 (bna5-2).